The primary structure comprises 114 residues: Putative neurotoxin 7 (114 aa).

The protein belongs to the scolopendra neurotoxin 8 family. Post-translationally, contains 3 disulfide bonds. As to expression, expressed by the venom gland.

It localises to the secreted. The protein is Putative neurotoxin 7 of Scolopendra mutilans (Chinese red-headed centipede).